The chain runs to 205 residues: uncharacterized protein (205 aa).

One can recognise a Nudix hydrolase domain in the interval 51–189 (ANVDAVAILA…KKGFAIDVRL (139 aa)). Positions 90–111 (GLVDSKESCEDAAIRELREETG) match the Nudix box motif.

This sequence belongs to the Nudix hydrolase family.

Its subcellular location is the cytoplasm. The protein resides in the nucleus. This is an uncharacterized protein from Schizosaccharomyces pombe (strain 972 / ATCC 24843) (Fission yeast).